We begin with the raw amino-acid sequence, 904 residues long: Pentatricopeptide repeat-containing protein At4g30825, chloroplastic (904 aa).

Residues 1–61 (MGSLRFSIPL…SSTRVLDKIR (61 aa)) constitute a chloroplast transit peptide. The interval 75-94 (NSASAAPVERSRSSKLSGDQ) is disordered. PPR repeat units follow at residues 173-203 (NFVA…LCGF), 209-243 (SYQV…GVRP), 244-274 (NVAT…MRKF), 278-312 (CESA…RVRL), 313-347 (KLEN…GFSP), 348-382 (NIIA…GLEP), 383-417 (DETS…GYKP), 418-452 (NSFN…GCQY), 487-521 (NQTS…DSAF), 522-553 (ESHL…MESD), 557-591 (NLHI…GVVL), 592-622 (DRIG…MDEQ), 628-662 (DVYL…GIHW), 663-697 (NQEM…GFTP), 698-732 (NTVT…GVVD), 733-766 (VISY…GFSV), 767-801 (SLEA…TSGP), 802-836 (DHYT…GLGP), 837-871 (DLCS…NIIP), and 872-904 (DKVT…QMGI).

It belongs to the PPR family. P subfamily.

The protein resides in the plastid. The protein localises to the chloroplast. This chain is Pentatricopeptide repeat-containing protein At4g30825, chloroplastic, found in Arabidopsis thaliana (Mouse-ear cress).